The sequence spans 130 residues: Phosphoribosyl-ATP pyrophosphatase (130 aa).

This sequence belongs to the PRA-PH family.

The protein resides in the cytoplasm. It catalyses the reaction 1-(5-phospho-beta-D-ribosyl)-ATP + H2O = 1-(5-phospho-beta-D-ribosyl)-5'-AMP + diphosphate + H(+). It participates in amino-acid biosynthesis; L-histidine biosynthesis; L-histidine from 5-phospho-alpha-D-ribose 1-diphosphate: step 2/9. The protein is Phosphoribosyl-ATP pyrophosphatase of Albidiferax ferrireducens (strain ATCC BAA-621 / DSM 15236 / T118) (Rhodoferax ferrireducens).